Consider the following 886-residue polypeptide: Alanine--tRNA ligase (886 aa).

His-564, His-568, Cys-676, and His-680 together coordinate Zn(2+).

The protein belongs to the class-II aminoacyl-tRNA synthetase family. Zn(2+) is required as a cofactor.

Its subcellular location is the cytoplasm. It catalyses the reaction tRNA(Ala) + L-alanine + ATP = L-alanyl-tRNA(Ala) + AMP + diphosphate. In terms of biological role, catalyzes the attachment of alanine to tRNA(Ala) in a two-step reaction: alanine is first activated by ATP to form Ala-AMP and then transferred to the acceptor end of tRNA(Ala). Also edits incorrectly charged Ser-tRNA(Ala) and Gly-tRNA(Ala) via its editing domain. In Bartonella bacilliformis, this protein is Alanine--tRNA ligase.